Consider the following 459-residue polypeptide: Protein FAM90A27P (459 aa).

Residues 1 to 10 (MARHSVHHQA) show a composition bias toward basic residues. 4 disordered regions span residues 1-41 (MARH…ESRV), 74-136 (SHKE…WKEP), 153-239 (HTTK…ALQP), and 259-459 (PDAD…SDSD). Residues 125–136 (PQEKMQEAWKEP) show a composition bias toward basic and acidic residues. The span at 184–194 (HNDSPQLSTCG) shows a compositional bias: polar residues. The segment covering 341 to 353 (KATAETAATKTAT) has biased composition (low complexity). The segment covering 415-427 (PPENSASAQSPRF) has biased composition (polar residues).

This sequence belongs to the FAM90 family.

This is Protein FAM90A27P (FAM90A27P) from Homo sapiens (Human).